A 519-amino-acid chain; its full sequence is MGVPRLGRFLEPFGKPVYFSSYPEVPLNCSLVIDGPSFAFWLWFSQGIVCSDFQGYQKAVLDFHHLLSRLRFKEIEYIFDGGLPFSKHQVRVNRYQQKINDLRSAYINLCVPIAQHVLMGLAKAKVIVCNEEADKYCAFQAKKLDAVILSQDSDFLLYDIDTPHYGYIPLQSLDVTSNGISGRKYRFDEIQKDFHFDLHILAAYLGVEGHPLDLVIDYHNTFEHICKILENSVKDKFIEKLVSKEELTRVHAFYSLNDLKLETSTINTFMWGRVQELLNSQLQPAEIWLPQLLELPSKHCSWLESAPLRLQAYANFSKQMPEFGTEVLEYFRLSDRLSKRLISVDYDYATVCETLDSKFSNWNLPHRLVLWTLRCMKNLNNITATSFLLMHVSLFLGSPMNLQPVEPTQEDIASVSRFIATIYSICMLIFSEDKEQSSISFQEFVSFSPLSSTLNFALFHQAASKLKTGKSPLSIVTDKTTASLTYKMYKDLTNDYSDIYMIMDIWKPKRKRKTKKDQS.

This sequence belongs to the asteroid family.

Its subcellular location is the cytoplasm. The protein localises to the mitochondrion. The polypeptide is Asteroid homolog 1 (ast1) (Schizosaccharomyces pombe (strain 972 / ATCC 24843) (Fission yeast)).